A 285-amino-acid polypeptide reads, in one-letter code: Protease HtpX homolog (285 aa).

2 helical membrane-spanning segments follow: residues 7-27 (TAML…MIGG) and 30-50 (GMTI…WFSD). Position 131 (His-131) interacts with Zn(2+). Residue Glu-132 is part of the active site. His-135 contacts Zn(2+). 2 helical membrane-spanning segments follow: residues 146–166 (ITAT…FFGG) and 177–197 (IAGI…QMAI). Glu-202 is a Zn(2+) binding site.

Belongs to the peptidase M48B family. Requires Zn(2+) as cofactor.

Its subcellular location is the cell inner membrane. In Burkholderia lata (strain ATCC 17760 / DSM 23089 / LMG 22485 / NCIMB 9086 / R18194 / 383), this protein is Protease HtpX homolog.